The primary structure comprises 236 residues: Proteasome subunit alpha (236 aa).

Belongs to the peptidase T1A family. The 20S proteasome core is composed of 14 alpha and 14 beta subunits that assemble into four stacked heptameric rings, resulting in a barrel-shaped structure. The two inner rings, each composed of seven catalytic beta subunits, are sandwiched by two outer rings, each composed of seven alpha subunits. The catalytic chamber with the active sites is on the inside of the barrel. Has a gated structure, the ends of the cylinder being occluded by the N-termini of the alpha-subunits. Is capped by the proteasome-associated ATPase, ARC.

The protein localises to the cytoplasm. It functions in the pathway protein degradation; proteasomal Pup-dependent pathway. With respect to regulation, the formation of the proteasomal ATPase ARC-20S proteasome complex, likely via the docking of the C-termini of ARC into the intersubunit pockets in the alpha-rings, may trigger opening of the gate for substrate entry. Interconversion between the open-gate and close-gate conformations leads to a dynamic regulation of the 20S proteasome proteolysis activity. Functionally, component of the proteasome core, a large protease complex with broad specificity involved in protein degradation. In Jonesia denitrificans (strain ATCC 14870 / DSM 20603 / BCRC 15368 / CIP 55.134 / JCM 11481 / NBRC 15587 / NCTC 10816 / Prevot 55134) (Listeria denitrificans), this protein is Proteasome subunit alpha.